A 162-amino-acid chain; its full sequence is SsrA-binding protein (162 aa).

This sequence belongs to the SmpB family.

It is found in the cytoplasm. In terms of biological role, required for rescue of stalled ribosomes mediated by trans-translation. Binds to transfer-messenger RNA (tmRNA), required for stable association of tmRNA with ribosomes. tmRNA and SmpB together mimic tRNA shape, replacing the anticodon stem-loop with SmpB. tmRNA is encoded by the ssrA gene; the 2 termini fold to resemble tRNA(Ala) and it encodes a 'tag peptide', a short internal open reading frame. During trans-translation Ala-aminoacylated tmRNA acts like a tRNA, entering the A-site of stalled ribosomes, displacing the stalled mRNA. The ribosome then switches to translate the ORF on the tmRNA; the nascent peptide is terminated with the 'tag peptide' encoded by the tmRNA and targeted for degradation. The ribosome is freed to recommence translation, which seems to be the essential function of trans-translation. The sequence is that of SsrA-binding protein from Shewanella frigidimarina (strain NCIMB 400).